Here is a 449-residue protein sequence, read N- to C-terminus: Biotin carboxylase (449 aa).

One can recognise a Biotin carboxylation domain in the interval Met-1–Gly-445. ATP contacts are provided by residues Lys-116, Lys-159, Gly-165–Gly-166, Glu-201–Leu-204, His-209, and His-236. Residues Ile-120–Ala-317 form the ATP-grasp domain. Lys-238 contributes to the hydrogencarbonate binding site. ATP-binding residues include Glu-276 and Glu-288. Mg(2+) contacts are provided by Glu-276, Glu-288, and Asn-290. Mn(2+)-binding residues include Glu-276, Glu-288, and Asn-290. Arg-292, Val-295, and Arg-338 together coordinate hydrogencarbonate. The active site involves Arg-292. Position 338 (Arg-338) interacts with biotin.

Acetyl-CoA carboxylase is a heterohexamer of biotin carboxyl carrier protein, biotin carboxylase and the two subunits of carboxyl transferase in a 2:2 complex. Mg(2+) is required as a cofactor. The cofactor is Mn(2+).

The catalysed reaction is N(6)-biotinyl-L-lysyl-[protein] + hydrogencarbonate + ATP = N(6)-carboxybiotinyl-L-lysyl-[protein] + ADP + phosphate + H(+). It participates in lipid metabolism; malonyl-CoA biosynthesis; malonyl-CoA from acetyl-CoA: step 1/1. In terms of biological role, this protein is a component of the acetyl coenzyme A carboxylase complex; first, biotin carboxylase catalyzes the carboxylation of the carrier protein and then the transcarboxylase transfers the carboxyl group to form malonyl-CoA. The polypeptide is Biotin carboxylase (accC) (Escherichia coli (strain K12)).